The following is a 345-amino-acid chain: cAMP-responsive element modulator (345 aa).

The region spanning 88-147 is the KID domain; sequence VQVAAIAETDESAESEGVIDSHKRREILSRRPSYRKILNELSSDVPGVPKIEEERSEEEG. Phosphoserine is present on residues S102, S129, S271, S274, and S277. The 60-residue stretch at 286-345 folds into the bZIP domain; that stretch reads TRKRELRLMKNREAAKECRRRKKEYVKCLESRVAVLEVQNKKLIEELETLKDICSPKTDY. The segment at 287–312 is basic motif; the sequence is RKRELRLMKNREAAKECRRRKKEYVK. The leucine-zipper stretch occupies residues 314-335; the sequence is LESRVAVLEVQNKKLIEELETL.

Belongs to the bZIP family. As to quaternary structure, binds DNA as a dimer. Interacts with FHL5. Interacts with CDC34. May interact with TSSK4. Post-translationally, isoform 9 is ubiquitinated by CDC34 and RAD6B in order to be degraded by the proteasome. In terms of processing, stimulated by phosphorylation. Phosphorylated on Ser-116 by TSSK4 in vitro. As to expression, expressed in testes (round spermatids) (at protein level). Isoform 14 is the major activator form in testes.

The protein localises to the nucleus. It is found in the cytoplasm. Its function is as follows. Transcriptional regulator that binds the cAMP response element (CRE), a sequence present in many viral and cellular promoters. Isoforms are either transcriptional activators or repressors. Plays a role in spermatogenesis and is involved in spermatid maturation. Functionally, may play a role in the regulation of the circadian clock: acts as a transcriptional repressor of the core circadian component PER1 by directly binding to cAMP response elements in its promoter. The sequence is that of cAMP-responsive element modulator from Homo sapiens (Human).